We begin with the raw amino-acid sequence, 360 residues long: Ethanolamine-phosphate cytidylyltransferase (360 aa).

Residues G207–F208, H215–A218, K243, H291–D294, and H321–L325 each bind CTP.

It belongs to the cytidylyltransferase family.

It carries out the reaction phosphoethanolamine + CTP + H(+) = CDP-ethanolamine + diphosphate. The protein operates within phospholipid metabolism; phosphatidylethanolamine biosynthesis; phosphatidylethanolamine from ethanolamine: step 2/3. Ethanolamine-phosphate cytidylyltransferase that catalyzes the second step in the synthesis of phosphatidylethanolamine (PE) from ethanolamine via the CDP-ethanolamine pathway. The chain is Ethanolamine-phosphate cytidylyltransferase (pctA) from Dictyostelium discoideum (Social amoeba).